Consider the following 271-residue polypeptide: Tryptophan synthase alpha chain (271 aa).

Residues Glu56 and Asp67 each act as proton acceptor in the active site.

The protein belongs to the TrpA family. In terms of assembly, tetramer of two alpha and two beta chains.

The catalysed reaction is (1S,2R)-1-C-(indol-3-yl)glycerol 3-phosphate + L-serine = D-glyceraldehyde 3-phosphate + L-tryptophan + H2O. The protein operates within amino-acid biosynthesis; L-tryptophan biosynthesis; L-tryptophan from chorismate: step 5/5. In terms of biological role, the alpha subunit is responsible for the aldol cleavage of indoleglycerol phosphate to indole and glyceraldehyde 3-phosphate. The protein is Tryptophan synthase alpha chain of Mycobacterium intracellulare.